A 270-amino-acid chain; its full sequence is Putative carboxymethylenebutenolidase (270 aa).

Catalysis depends on residues C147, D204, and H236.

The protein belongs to the dienelactone hydrolase family.

The enzyme catalyses 2-(5-oxo-2,5-dihydrofuran-2-ylidene)acetate + H2O = 4-oxohex-2-enedioate + H(+). The sequence is that of Putative carboxymethylenebutenolidase (ysgA) from Salmonella typhimurium (strain LT2 / SGSC1412 / ATCC 700720).